The following is a 141-amino-acid chain: Nucleoside diphosphate kinase (141 aa).

Positions 11, 59, 87, 93, 104, and 114 each coordinate ATP. The active-site Pros-phosphohistidine intermediate is the His117.

It belongs to the NDK family. The cofactor is Mg(2+).

The protein localises to the cytoplasm. The catalysed reaction is a 2'-deoxyribonucleoside 5'-diphosphate + ATP = a 2'-deoxyribonucleoside 5'-triphosphate + ADP. It carries out the reaction a ribonucleoside 5'-diphosphate + ATP = a ribonucleoside 5'-triphosphate + ADP. In terms of biological role, major role in the synthesis of nucleoside triphosphates other than ATP. The ATP gamma phosphate is transferred to the NDP beta phosphate via a ping-pong mechanism, using a phosphorylated active-site intermediate. This Staphylothermus marinus (strain ATCC 43588 / DSM 3639 / JCM 9404 / F1) protein is Nucleoside diphosphate kinase.